The primary structure comprises 326 residues: Chitinase 12 (326 aa).

Positions 1–21 (MRALAVVAMVATAFLAAAVHA) are cleaved as a signal peptide. Residues 22 to 62 (EQCGSQAGGAVCPNCLCCSQFGWCGSTSDYCGAGCQSQCSA) enclose the Chitin-binding type-1 domain. 8 disulfide bridges follow: Cys-24–Cys-39, Cys-33–Cys-45, Cys-36–Cys-65, Cys-38–Cys-52, Cys-56–Cys-60, Cys-102–Cys-165, Cys-179–Cys-187, and Cys-286–Cys-318. Catalysis depends on Glu-147, which acts as the Proton donor.

This sequence belongs to the glycosyl hydrolase 19 family. Chitinase class I subfamily. In terms of tissue distribution, expressed in meristems and at lower levels in roots and sheaths.

The catalysed reaction is Random endo-hydrolysis of N-acetyl-beta-D-glucosaminide (1-&gt;4)-beta-linkages in chitin and chitodextrins.. Its function is as follows. Hydrolyzes chitin and plays a role in defense against fungal pathogens containing chitin. Its overexpression confers enhanced resistance to sheath blight pathogen (R.solani). This chain is Chitinase 12 (Cht12), found in Oryza sativa subsp. japonica (Rice).